The primary structure comprises 469 residues: Rubisco accumulation factor 1, chloroplastic (469 aa).

Residues 1–46 constitute a chloroplast transit peptide; the sequence is MLSLSHPHPHPASTTAAAAARHHHRRNAPFAPHHRRRRRFAHLTTS. Residues 1-78 form a disordered region; it reads MLSLSHPHPH…TPPPTAPPDQ (78 aa). The segment covering 20 to 41 has biased composition (basic residues); sequence ARHHHRRNAPFAPHHRRRRRFA. The N-terminal alpha-helix stretch occupies residues 90-281; the sequence is LPDKYKDLDL…PARARVEAEL (192 aa). The stretch at 246–294 forms a coiled coil; that stretch reads RQSREAIDAEDSVAELERALEVVDTEPARARVEAELDRARRKAAGEEVD. Residues 311–456 form a C-terminal beta sheet region; it reads VPVVRLMYGE…AEVLVVVRPP (146 aa).

Belongs to the RAF family.

It localises to the plastid. It is found in the chloroplast. Required for assembly or stability of RuBisCO. Acts at a postchaperonin step to fold and/or assemble the large subunit (LS) into RuBisCO. The polypeptide is Rubisco accumulation factor 1, chloroplastic (RAF1) (Oryza sativa subsp. japonica (Rice)).